A 399-amino-acid chain; its full sequence is Tryptophan synthase beta chain (399 aa).

Lys-90 bears the N6-(pyridoxal phosphate)lysine mark.

It belongs to the TrpB family. Tetramer of two alpha and two beta chains. It depends on pyridoxal 5'-phosphate as a cofactor.

The enzyme catalyses (1S,2R)-1-C-(indol-3-yl)glycerol 3-phosphate + L-serine = D-glyceraldehyde 3-phosphate + L-tryptophan + H2O. It participates in amino-acid biosynthesis; L-tryptophan biosynthesis; L-tryptophan from chorismate: step 5/5. In terms of biological role, the beta subunit is responsible for the synthesis of L-tryptophan from indole and L-serine. This Phocaeicola vulgatus (strain ATCC 8482 / DSM 1447 / JCM 5826 / CCUG 4940 / NBRC 14291 / NCTC 11154) (Bacteroides vulgatus) protein is Tryptophan synthase beta chain.